Reading from the N-terminus, the 388-residue chain is FBD-associated F-box protein At5g60610 (388 aa).

In terms of domain architecture, F-box spans 1–47 (MDRISGLPDELLVKIISFVPTKVAVSTSILSKRWESLWKWVPKLECD). The FBD domain maps to 337–388 (NWKNIQRSVPKCLKSSLKTLEFAGYTARPEERDFLSFIFKKARCLKTSSISH).

The polypeptide is FBD-associated F-box protein At5g60610 (Arabidopsis thaliana (Mouse-ear cress)).